The chain runs to 61 residues: Metallothionein-2 (61 aa).

Met1 carries the post-translational modification N-acetylmethionine. The segment at 1–29 (MDPNCSCASDGSCSCAGACKCKQCKCTSC) is beta. A divalent metal cation contacts are provided by Cys5, Cys7, Cys13, Cys15, Cys19, Cys21, Cys24, Cys26, Cys29, Cys33, Cys34, Cys36, Cys37, Cys41, Cys44, Cys48, Cys50, and Cys57. The interval 30-61 (KKSCCSCCPVGCAKCSQGCICKEASDKCSCCA) is alpha. The residue at position 58 (Ser58) is a Phosphoserine. A divalent metal cation is bound by residues Cys59 and Cys60.

This sequence belongs to the metallothionein superfamily. Type 1 family.

Metallothioneins have a high content of cysteine residues that bind various heavy metals; these proteins are transcriptionally regulated by both heavy metals and glucocorticoids. In Mus musculus (Mouse), this protein is Metallothionein-2 (Mt2).